Reading from the N-terminus, the 405-residue chain is Cytoplasmic polyadenylated homeobox-like protein (405 aa).

Disordered stretches follow at residues 1–33 (MNLD…KHRH) and 340–363 (PWDL…QNNG). The segment covering 13-23 (EEDHHNEERQT) has biased composition (basic and acidic residues). Positions 24–33 (KNKRKTKHRH) are enriched in basic residues. Residues 28-87 (KTKHRHKFSEELLQELKEIFGENCYPDYTTRKTLAIKFDCPVNVIDNWFQNKRARLPPAE) constitute a DNA-binding region (homeobox). Over residues 346 to 360 (QWSSAQSQLQSQLPQ) the composition is skewed to low complexity.

It is found in the nucleus. In terms of biological role, transcription factor that acts as activator. The protein is Cytoplasmic polyadenylated homeobox-like protein of Homo sapiens (Human).